A 448-amino-acid polypeptide reads, in one-letter code: 4-hydroxybenzoate transporter PcaK (448 aa).

Residues 1-30 (MNQAQNSVGKSLDVQSFINQQPLSRYQWRV) lie on the Cytoplasmic side of the membrane. A helical membrane pass occupies residues 31–51 (VLLCFLIVFLDGLDTAAMGFI). At 52–67 (APALSQEWGIDRASLG) the chain is on the periplasmic side. The helical transmembrane segment at 68–88 (PVMSAALIGMVFGALGSGPLA) threads the bilayer. The Cytoplasmic portion of the chain corresponds to 89 to 94 (DRFGRK). A helical transmembrane segment spans residues 95–115 (GVLVGAVLVFGGFSLASAYAT). Residues 116 to 119 (NVDQ) are Periplasmic-facing. The helical transmembrane segment at 120–140 (LLVLRFLTGLGLGAGMPNATT) threads the bilayer. Residues 141 to 152 (LLSEYTPERLKS) are Cytoplasmic-facing. The helical transmembrane segment at 153–173 (LLVTSMFCGFNLGMAGGGFIS) threads the bilayer. Over 174–184 (AKMIPAYGWHS) the chain is Periplasmic. A helical membrane pass occupies residues 185–205 (LLVIGGVLPLLLALVLMVWLP). Residues 206-261 (ESARFLVVRNRGTDKIRKTLSPIAPQVVAEAGSFSVPEQKAVAARSVFAVIFSGTY) are Cytoplasmic-facing. A helical membrane pass occupies residues 262 to 282 (GLGTMLLWLTYFMGLVIVYLL). The Periplasmic segment spans residues 283-301 (TSWLPTLMRDSGASMEQAA). A helical membrane pass occupies residues 302-322 (FIGALFQFGGVLSAVGVGWAM). The Cytoplasmic segment spans residues 323-329 (DRYNPHK). A helical transmembrane segment spans residues 330–350 (VIGIFYLLAGVFAYAVGQSLG). Position 351 (Asn351) is a topological domain, periplasmic. A helical membrane pass occupies residues 352-372 (ITVLATLVLIAGMCVNGAQSA). The Cytoplasmic portion of the chain corresponds to 373–398 (MPSLAARFYPTQGRATGVSWMLGIGR). A helical membrane pass occupies residues 399–419 (FGAILGAWSGATLLGLGWNFE). The Periplasmic segment spans residues 420-421 (QV). A helical membrane pass occupies residues 422 to 442 (LTALLVPAALATVGVIVKGLV). Topologically, residues 443–448 (SHADAT) are cytoplasmic.

It belongs to the major facilitator superfamily. Aromatic acid:H(+) symporter (AAHS) (TC 2.A.1.15) family.

It is found in the cell inner membrane. Functionally, transports 4-hydroxybenzoate (4-HBA) and protocatechuate across the membrane. Driven by the proton motive force. Also functions as a chemoreceptor, which is required for chemotaxis to aromatic acids. The polypeptide is 4-hydroxybenzoate transporter PcaK (pcaK) (Pseudomonas putida (Arthrobacter siderocapsulatus)).